We begin with the raw amino-acid sequence, 412 residues long: DnaJ homolog subfamily A member 2 (412 aa).

Residues 8 to 70 (KLYDILGVPP…EKRELYDRYG (63 aa)) enclose the J domain. Lys39 carries the N6-acetyllysine modification. 2 positions are modified to phosphoserine: Ser78 and Ser123. A CR-type zinc finger spans residues 130 to 214 (GKTTKLQLSK…CEGKKVIKEV (85 aa)). Lys134 participates in a covalent cross-link: Glycyl lysine isopeptide (Lys-Gly) (interchain with G-Cter in SUMO2). Positions 143 and 146 each coordinate Zn(2+). The stretch at 143 to 150 (CSACSGQG) is one CXXCXGXG motif repeat. Residue Lys152 is modified to N6-acetyllysine. The Zn(2+) site is built by Cys159, Cys162, Cys186, Cys189, Cys202, and Cys205. 3 CXXCXGXG motif repeats span residues 159–166 (CSACRGRG), 186–193 (CSDCNGEG), and 202–209 (CKKCEGKK). The interval 365 to 412 (IGETEEVELQEFDSTRGSGGGQRREAYNDSSDEESSSHHGPGVQCAHQ) is disordered. Residue Tyr391 is modified to Phosphotyrosine. Residues Ser394 and Ser395 each carry the phosphoserine modification. Cys409 carries the post-translational modification Cysteine methyl ester. Residue Cys409 is the site of S-farnesyl cysteine attachment. The propeptide at 410–412 (AHQ) is removed in mature form.

It is found in the membrane. In terms of biological role, co-chaperone of Hsc70. Stimulates ATP hydrolysis and the folding of unfolded proteins mediated by HSPA1A/B (in vitro). The sequence is that of DnaJ homolog subfamily A member 2 (Dnaja2) from Mus musculus (Mouse).